The primary structure comprises 142 residues: MAKKVAGQLKLQVKAGSANPSPPIGPALGQRGINIMEFCKAFNAATQEMEKGMPIPVVITYYQDKSFTFIMKQPPVSYFLKREAKIQSGSKTPGKAKAGSISKAQIRTIAEAKMKDLNAADIEGAMAMVEGSARSMGLEVTG.

The protein belongs to the universal ribosomal protein uL11 family. In terms of assembly, part of the ribosomal stalk of the 50S ribosomal subunit. Interacts with L10 and the large rRNA to form the base of the stalk. L10 forms an elongated spine to which L12 dimers bind in a sequential fashion forming a multimeric L10(L12)X complex. One or more lysine residues are methylated.

In terms of biological role, forms part of the ribosomal stalk which helps the ribosome interact with GTP-bound translation factors. The chain is Large ribosomal subunit protein uL11 from Sinorhizobium fredii (strain NBRC 101917 / NGR234).